Consider the following 342-residue polypeptide: Phosphoribosylformylglycinamidine cyclo-ligase (342 aa).

Belongs to the AIR synthase family.

Its subcellular location is the cytoplasm. The enzyme catalyses 2-formamido-N(1)-(5-O-phospho-beta-D-ribosyl)acetamidine + ATP = 5-amino-1-(5-phospho-beta-D-ribosyl)imidazole + ADP + phosphate + H(+). It participates in purine metabolism; IMP biosynthesis via de novo pathway; 5-amino-1-(5-phospho-D-ribosyl)imidazole from N(2)-formyl-N(1)-(5-phospho-D-ribosyl)glycinamide: step 2/2. The chain is Phosphoribosylformylglycinamidine cyclo-ligase from Staphylococcus saprophyticus subsp. saprophyticus (strain ATCC 15305 / DSM 20229 / NCIMB 8711 / NCTC 7292 / S-41).